The primary structure comprises 406 residues: GTPase Obg (406 aa).

The region spanning 1-159 is the Obg domain; that stretch reads MKFVDEVSIH…RDLKLELKVL (159 aa). The interval 127–148 is disordered; the sequence is NTRFKSSTNRAPRQTTPGKPGE. Over residues 129 to 143 the composition is skewed to polar residues; that stretch reads RFKSSTNRAPRQTTP. Positions 160 to 334 constitute an OBG-type G domain; it reads ADVGLLGLPN…LSQDIMRYLD (175 aa). GTP-binding positions include 166-173, 191-195, 213-216, 283-286, and 315-317; these read GLPNAGKS, FTTLV, DIPG, NKMD, and SAL. Serine 173 and threonine 193 together coordinate Mg(2+). The disordered stretch occupies residues 378 to 406; the sequence is GLKNAGAADDDDFDDEEDDGDGPEIFYVP. The span at 385–399 shows a compositional bias: acidic residues; sequence ADDDDFDDEEDDGDG.

It belongs to the TRAFAC class OBG-HflX-like GTPase superfamily. OBG GTPase family. Monomer. Requires Mg(2+) as cofactor.

It localises to the cytoplasm. An essential GTPase which binds GTP, GDP and possibly (p)ppGpp with moderate affinity, with high nucleotide exchange rates and a fairly low GTP hydrolysis rate. Plays a role in control of the cell cycle, stress response, ribosome biogenesis and in those bacteria that undergo differentiation, in morphogenesis control. This Pseudomonas paraeruginosa (strain DSM 24068 / PA7) (Pseudomonas aeruginosa (strain PA7)) protein is GTPase Obg.